Consider the following 126-residue polypeptide: Aspartate 1-decarboxylase (126 aa).

Ser25 acts as the Schiff-base intermediate with substrate; via pyruvic acid in catalysis. The residue at position 25 (Ser25) is a Pyruvic acid (Ser). Thr57 is a substrate binding site. Tyr58 (proton donor) is an active-site residue. Substrate is bound at residue Gly73–Ala75.

The protein belongs to the PanD family. In terms of assembly, heterooctamer of four alpha and four beta subunits. Requires pyruvate as cofactor. Post-translationally, is synthesized initially as an inactive proenzyme, which is activated by self-cleavage at a specific serine bond to produce a beta-subunit with a hydroxyl group at its C-terminus and an alpha-subunit with a pyruvoyl group at its N-terminus.

Its subcellular location is the cytoplasm. It catalyses the reaction L-aspartate + H(+) = beta-alanine + CO2. Its pathway is cofactor biosynthesis; (R)-pantothenate biosynthesis; beta-alanine from L-aspartate: step 1/1. Functionally, catalyzes the pyruvoyl-dependent decarboxylation of aspartate to produce beta-alanine. In Methylococcus capsulatus (strain ATCC 33009 / NCIMB 11132 / Bath), this protein is Aspartate 1-decarboxylase.